We begin with the raw amino-acid sequence, 144 residues long: MFLNTIQPAVGATHAGRRVGRGIGSGLGKTGGRGHKGQKSRSGGFHKVGFEGGQMPLQRRLPKRGFKSLTASANAQLRLSELESIAVNEIDILVLKQAGLIASTVSNVKVIAFGEISKAVALKGIKVTKGARAAIEAVGGKIEM.

The interval 20–49 is disordered; sequence GRGIGSGLGKTGGRGHKGQKSRSGGFHKVG. Over residues 21 to 31 the composition is skewed to gly residues; sequence RGIGSGLGKTG.

The protein belongs to the universal ribosomal protein uL15 family. In terms of assembly, part of the 50S ribosomal subunit.

Its function is as follows. Binds to the 23S rRNA. The protein is Large ribosomal subunit protein uL15 of Neisseria meningitidis serogroup A / serotype 4A (strain DSM 15465 / Z2491).